Reading from the N-terminus, the 245-residue chain is Fibroblast growth factor 13 (245 aa).

Residues 1–36 (MAAAIASSLIRQKRQAREREKSNACKCVSSPSKGKT) form a disordered region. A mediates targeting to the nucleus region spans residues 1–62 (MAAAIASSLI…GSKKRRRRRP (62 aa)). A mediates interaction with sodium channels region spans residues 67-201 (KGIVTKLYSR…AHFLPKPLKV (135 aa)). Phosphoserine is present on Ser208. Residues 213 to 245 (TEFSRSGSGTPTKSRSVSGVLNGGKSMSHNEST) are disordered. The segment covering 215–245 (FSRSGSGTPTKSRSVSGVLNGGKSMSHNEST) has biased composition (polar residues).

The protein belongs to the heparin-binding growth factors family. As to quaternary structure, interacts with SCN8A; regulates SCN8A activity. Interacts with SCN1A; may regulate SCN1A activity. Interacts with SCN5A; the interaction is direct and may regulate SNC5A density at membranes and function. May also interact with SCN2A and SCN11A. Interacts with MAPK8IP2; may regulate the MAPK8IP2 scaffolding activity. May be phosphorylated. Ubiquitously expressed. Predominantly expressed in the nervous system.

The protein localises to the nucleus. It localises to the cytoplasm. It is found in the cell projection. The protein resides in the filopodium. Its subcellular location is the growth cone. The protein localises to the dendrite. It localises to the cell membrane. It is found in the sarcolemma. Microtubule-binding protein which directly binds tubulin and is involved in both polymerization and stabilization of microtubules. Through its action on microtubules, may participate in the refinement of axons by negatively regulating axonal and leading processes branching. Plays a crucial role in neuron polarization and migration in the cerebral cortex and the hippocampus. Regulates voltage-gated sodium channel transport and function. May also play a role in MAPK signaling. Required for the development of axonal initial segment-targeting inhibitory GABAergic synapses made by chandelier neurons. This chain is Fibroblast growth factor 13, found in Homo sapiens (Human).